Here is a 144-residue protein sequence, read N- to C-terminus: Large ribosomal subunit protein uL15 (144 aa).

The disordered stretch occupies residues 1–54 (MRLNTLSPAEGSKKAGKRLGRGIGSGLGKTGGRGHKGQNSRSGGGVRRGFEGGQ). The segment covering 21–31 (RGIGSGLGKTG) has biased composition (gly residues).

The protein belongs to the universal ribosomal protein uL15 family. In terms of assembly, part of the 50S ribosomal subunit.

Binds to the 23S rRNA. The polypeptide is Large ribosomal subunit protein uL15 (Enterobacter sp. (strain 638)).